Here is a 255-residue protein sequence, read N- to C-terminus: Myogenic factor 5 (255 aa).

One can recognise a bHLH domain in the interval 83–134 (DRRKAATMRERRRLKKVNQAFETLKRCTTTNPNQRLPKVEILRNAIRYIESL). Residues 226 to 249 (DTASLSPATSANSQPATPGPSSSR) form a disordered region.

As to quaternary structure, efficient DNA binding requires dimerization with another bHLH protein.

Its subcellular location is the nucleus. Acts as a transcriptional activator that promotes transcription of muscle-specific target genes and plays a role in muscle differentiation. Together with MYOG and MYOD1, co-occupies muscle-specific gene promoter core region during myogenesis. Induces fibroblasts to differentiate into myoblasts. Probable sequence specific DNA-binding protein. The sequence is that of Myogenic factor 5 (Myf5) from Mus musculus (Mouse).